The chain runs to 375 residues: 23S rRNA (uracil(747)-C(5))-methyltransferase RlmC (375 aa).

The [4Fe-4S] cluster site is built by C3, C11, C14, and C87. The S-adenosyl-L-methionine site is built by Q212, F241, E262, and N307. C334 functions as the Nucleophile in the catalytic mechanism.

It belongs to the class I-like SAM-binding methyltransferase superfamily. RNA M5U methyltransferase family. RlmC subfamily.

It carries out the reaction uridine(747) in 23S rRNA + S-adenosyl-L-methionine = 5-methyluridine(747) in 23S rRNA + S-adenosyl-L-homocysteine + H(+). Functionally, catalyzes the formation of 5-methyl-uridine at position 747 (m5U747) in 23S rRNA. The protein is 23S rRNA (uracil(747)-C(5))-methyltransferase RlmC of Escherichia coli O127:H6 (strain E2348/69 / EPEC).